A 295-amino-acid polypeptide reads, in one-letter code: Tyrosine recombinase XerD (295 aa).

Positions 1-85 (MNTIIEEYLN…TIRSFHQFAL (85 aa)) constitute a Core-binding (CB) domain. The region spanning 106–289 (KLPDVLEIDE…SKSQIRKMYT (184 aa)) is the Tyr recombinase domain. Active-site residues include Arg-146, Lys-170, His-241, Arg-244, and His-267. Residue Tyr-276 is the O-(3'-phospho-DNA)-tyrosine intermediate of the active site.

This sequence belongs to the 'phage' integrase family. XerD subfamily. Forms a cyclic heterotetrameric complex composed of two molecules of XerC and two molecules of XerD.

It localises to the cytoplasm. Site-specific tyrosine recombinase, which acts by catalyzing the cutting and rejoining of the recombining DNA molecules. The XerC-XerD complex is essential to convert dimers of the bacterial chromosome into monomers to permit their segregation at cell division. It also contributes to the segregational stability of plasmids. In Staphylococcus epidermidis (strain ATCC 12228 / FDA PCI 1200), this protein is Tyrosine recombinase XerD.